Here is a 180-residue protein sequence, read N- to C-terminus: Der GTPase-activating protein YihI (180 aa).

Disordered stretches follow at residues 1–87 (MSRK…MTKQ) and 142–180 (GLLEPEEEEDFTASSAKGSRNDDDLLADFDDINFDDYKG). Residues 23 to 32 (NRTESDVEGR) show a composition bias toward basic and acidic residues. The segment covering 33–43 (LRKRAKKRKGL) has biased composition (basic residues). Basic and acidic residues predominate over residues 51-68 (EVNEQKKQSSEQNRDPRL). The segment covering 165–180 (DLLADFDDINFDDYKG) has biased composition (acidic residues).

The protein belongs to the YihI family. In terms of assembly, interacts with Der.

In terms of biological role, a GTPase-activating protein (GAP) that modifies Der/EngA GTPase function. May play a role in ribosome biogenesis. The protein is Der GTPase-activating protein YihI of Vibrio parahaemolyticus serotype O3:K6 (strain RIMD 2210633).